The following is a 465-amino-acid chain: FAD-dependent monooxygenase penM (465 aa).

A helical membrane pass occupies residues 5–25 (QFHVIIVGGSIAGLTLAHCLH). Residues Glu-35, Gly-49, Arg-108, Asp-299, and Ala-312 each contribute to the FAD site. Residues 435–455 (VLVLLLSALTWSCLGNMNIIM) traverse the membrane as a helical segment.

It belongs to the paxM FAD-dependent monooxygenase family. FAD is required as a cofactor.

The protein localises to the membrane. The protein operates within secondary metabolite biosynthesis. Its function is as follows. FAD-dependent monooxygenase; part of the gene cluster that mediates the biosynthesis of the indole diterpenes penitrems. The geranylgeranyl diphosphate (GGPP) synthase penG catalyzes the first step in penitrem biosynthesis via conversion of farnesyl pyrophosphate and isopentyl pyrophosphate into geranylgeranyl pyrophosphate (GGPP). Condensation of indole-3-glycerol phosphate with GGPP by the prenyl transferase penC then forms 3-geranylgeranylindole (3-GGI). Epoxidation by the FAD-dependent monooxygenase penM leads to a epoxidized-GGI that is substrate of the terpene cyclase penB for cyclization to yield paspaline. Paspaline is subsequently converted to 13-desoxypaxilline by the cytochrome P450 monooxygenase penP, the latter being then converted to paxilline by the cytochrome P450 monooxygenase penQ. Paxilline is converted to beta-paxitriol via C-10 ketoreduction by the short-chain dehydrogenase PC-15 which can be monoprenylated at the C-20 by the indole diterpene prenyltransferase penD. A two-step elimination (acetylation and elimination) process performed by the O-acetyltransferase PC-16 and the P.simplicissimum ptmI-ortholog not yet identified in P.crustosum, leads to the production of the prenylated form of penijanthine. The FAD-linked oxidoreductase ptmO then converts the prenylated form of penijanthine into PC-M5 which is in turn transformed into PC-M4 by the aromatic dimethylallyltransferase PC-22. A series of oxidation steps involving 4 cytochrome P450 monooxygenases (PC-21, PC-05, PC-23, PC-20) and a FAD-dependent monooxygenase (PC-14) are required for the transformation of PC-M4 to penitrems A and E. Synthesis of these final products is proposed to proceed via penitrems D and C (PC-21, PC-05, PC-14) and penitrems B and F (PC-21, PC-05, PC-14, PC-23). The sequence is that of FAD-dependent monooxygenase penM from Penicillium crustosum (Blue mold fungus).